Consider the following 85-residue polypeptide: Putative regulatory protein DICTH_1339 (85 aa).

It belongs to the RemA family.

The sequence is that of Putative regulatory protein DICTH_1339 from Dictyoglomus thermophilum (strain ATCC 35947 / DSM 3960 / H-6-12).